The sequence spans 479 residues: Cysteine--tRNA ligase (479 aa).

Cys28 contributes to the Zn(2+) binding site. Positions 30–40 match the 'HIGH' region motif; the sequence is PTVYDHAHLGH. Zn(2+)-binding residues include Cys207, His232, and Glu236. A 'KMSKS' region motif is present at residues 264-268; sequence KMSKS. Lys267 lines the ATP pocket.

This sequence belongs to the class-I aminoacyl-tRNA synthetase family. Zn(2+) is required as a cofactor.

It is found in the cytoplasm. The catalysed reaction is tRNA(Cys) + L-cysteine + ATP = L-cysteinyl-tRNA(Cys) + AMP + diphosphate. The polypeptide is Cysteine--tRNA ligase (Methanococcus aeolicus (strain ATCC BAA-1280 / DSM 17508 / OCM 812 / Nankai-3)).